We begin with the raw amino-acid sequence, 386 residues long: O-phospho-L-seryl-tRNA:Cys-tRNA synthase (386 aa).

Residues 89-90 (AR), asparagine 196, and 219-221 (SGH) each bind pyridoxal 5'-phosphate. Lysine 222 bears the N6-(pyridoxal phosphate)lysine mark.

This sequence belongs to the SepCysS family. Homodimer. Interacts with SepRS. Requires pyridoxal 5'-phosphate as cofactor.

It catalyses the reaction O-phospho-L-seryl-tRNA(Cys) + hydrogen sulfide + H(+) = L-cysteinyl-tRNA(Cys) + phosphate. Converts O-phospho-L-seryl-tRNA(Cys) (Sep-tRNA(Cys)) to L-cysteinyl-tRNA(Cys) (Cys-tRNA(Cys)). The chain is O-phospho-L-seryl-tRNA:Cys-tRNA synthase from Methanosarcina mazei (strain ATCC BAA-159 / DSM 3647 / Goe1 / Go1 / JCM 11833 / OCM 88) (Methanosarcina frisia).